We begin with the raw amino-acid sequence, 275 residues long: Dermonecrotic toxin LspiSicTox-betaIE4i (275 aa).

Residues glutamate 24 and aspartate 26 each coordinate Mg(2+). The active-site Nucleophile is the histidine 40. 2 disulfides stabilise this stretch: cysteine 44-cysteine 50 and cysteine 46-cysteine 188. Position 84 (aspartate 84) interacts with Mg(2+).

It belongs to the arthropod phospholipase D family. Class II subfamily. The cofactor is Mg(2+). As to expression, expressed by the venom gland.

Its subcellular location is the secreted. The enzyme catalyses an N-(acyl)-sphingosylphosphocholine = an N-(acyl)-sphingosyl-1,3-cyclic phosphate + choline. It carries out the reaction an N-(acyl)-sphingosylphosphoethanolamine = an N-(acyl)-sphingosyl-1,3-cyclic phosphate + ethanolamine. It catalyses the reaction a 1-acyl-sn-glycero-3-phosphocholine = a 1-acyl-sn-glycero-2,3-cyclic phosphate + choline. The catalysed reaction is a 1-acyl-sn-glycero-3-phosphoethanolamine = a 1-acyl-sn-glycero-2,3-cyclic phosphate + ethanolamine. Its function is as follows. Dermonecrotic toxins cleave the phosphodiester linkage between the phosphate and headgroup of certain phospholipids (sphingolipid and lysolipid substrates), forming an alcohol (often choline) and a cyclic phosphate. This toxin acts on sphingomyelin (SM). It may also act on ceramide phosphoethanolamine (CPE), lysophosphatidylcholine (LPC) and lysophosphatidylethanolamine (LPE), but not on lysophosphatidylserine (LPS), and lysophosphatidylglycerol (LPG). It acts by transphosphatidylation, releasing exclusively cyclic phosphate products as second products. Induces dermonecrosis, hemolysis, increased vascular permeability, edema, inflammatory response, and platelet aggregation. This chain is Dermonecrotic toxin LspiSicTox-betaIE4i, found in Loxosceles spinulosa (Recluse spider).